The chain runs to 542 residues: Protein phosphatase 1G (542 aa).

G2 is lipidated: N-myristoyl glycine. Omega-N-methylarginine is present on R22. A PPM-type phosphatase domain is found at 26–502 (PYGFSAMQGW…DNMTCIIICF (477 aa)). Mn(2+) is bound by residues D60 and G61. Disordered regions lie at residues 118–139 (AGRPTEDEDDKEKVADEDDVDN) and 162–325 (QNCQ…SDSG). T122 is subject to Phosphothreonine. Composition is skewed to acidic residues over residues 123–139 (EDEDDKEKVADEDDVDN) and 259–309 (DSED…DEEM). K380 bears the N6-acetyllysine mark. Positions 438 and 493 each coordinate Mn(2+). Positions 510 to 542 (LQPESGKRKLEEALSTEGAEENGNSDKKKAKRD) are disordered. S524 is subject to Phosphoserine.

It belongs to the PP2C family. In terms of assembly, interacts with NOL3; may dephosphorylate NOL3. Mg(2+) is required as a cofactor. Requires Mn(2+) as cofactor.

It localises to the cytoplasm. Its subcellular location is the membrane. It catalyses the reaction O-phospho-L-seryl-[protein] + H2O = L-seryl-[protein] + phosphate. The catalysed reaction is O-phospho-L-threonyl-[protein] + H2O = L-threonyl-[protein] + phosphate. The polypeptide is Protein phosphatase 1G (Rattus norvegicus (Rat)).